The sequence spans 452 residues: Ribosome biogenesis protein YTM1 (452 aa).

The segment at 17-98 is ubiquitin-like (UBL) domain; that stretch reads IVSQPVVFTT…EETLEIEYIE (82 aa). WD repeat units follow at residues 110–148, 150–195, and 208–247; these read PHED…TASI, AHPA…NPMA, and LHTA…TDEV. The tract at residues 245–269 is disordered; sequence DEVPEPALNERDRSKKRRRVEEGEV. Positions 252–269 are enriched in basic and acidic residues; that stretch reads LNERDRSKKRRRVEEGEV. WD repeat units follow at residues 282–322, 325–364, 371–411, and 418–452; these read SHTA…CSHT, ASEK…TILT, MHPS…SAMA, and GSGQ…EQKV.

The protein belongs to the WD repeat WDR12/YTM1 family. As to quaternary structure, component of the NOP7 complex, composed of ERB1, NOP7 and YTM1. The complex is held together by ERB1, which interacts with NOP7 via its N-terminal domain and with YTM1 via a high-affinity interaction between the seven-bladed beta-propeller domains of the 2 proteins. The NOP7 complex associates with the 66S pre-ribosome. Interacts (via UBL domain) with MDN1 (via VWFA/MIDAS domain).

The protein localises to the nucleus. The protein resides in the nucleolus. Its subcellular location is the nucleoplasm. In terms of biological role, component of the NOP7 complex, which is required for maturation of the 25S and 5.8S ribosomal RNAs and formation of the 60S ribosome. This chain is Ribosome biogenesis protein YTM1, found in Laccaria bicolor (strain S238N-H82 / ATCC MYA-4686) (Bicoloured deceiver).